The sequence spans 447 residues: Signal recognition particle 54 kDa protein (447 aa).

Residues 103–110 (GVQGSGKT), 185–189 (DTAGR), and 245–248 (TKMD) each bind GTP.

The protein belongs to the GTP-binding SRP family. SRP54 subfamily. As to quaternary structure, part of the signal recognition particle protein translocation system, which is composed of SRP and FtsY. Archaeal SRP consists of a 7S RNA molecule of 300 nucleotides and two protein subunits: SRP54 and SRP19.

It localises to the cytoplasm. It catalyses the reaction GTP + H2O = GDP + phosphate + H(+). Functionally, involved in targeting and insertion of nascent membrane proteins into the cytoplasmic membrane. Binds to the hydrophobic signal sequence of the ribosome-nascent chain (RNC) as it emerges from the ribosomes. The SRP-RNC complex is then targeted to the cytoplasmic membrane where it interacts with the SRP receptor FtsY. The polypeptide is Signal recognition particle 54 kDa protein (Saccharolobus islandicus (strain Y.G.57.14 / Yellowstone #1) (Sulfolobus islandicus)).